The primary structure comprises 334 residues: Phosphoribosylformylglycinamidine cyclo-ligase (334 aa).

Belongs to the AIR synthase family.

It is found in the cytoplasm. It catalyses the reaction 2-formamido-N(1)-(5-O-phospho-beta-D-ribosyl)acetamidine + ATP = 5-amino-1-(5-phospho-beta-D-ribosyl)imidazole + ADP + phosphate + H(+). It participates in purine metabolism; IMP biosynthesis via de novo pathway; 5-amino-1-(5-phospho-D-ribosyl)imidazole from N(2)-formyl-N(1)-(5-phospho-D-ribosyl)glycinamide: step 2/2. The protein is Phosphoribosylformylglycinamidine cyclo-ligase of Pyrococcus furiosus (strain ATCC 43587 / DSM 3638 / JCM 8422 / Vc1).